We begin with the raw amino-acid sequence, 1007 residues long: Serine/threonine-protein kinase atg1 (1007 aa).

The Protein kinase domain maps to 30 to 336; the sequence is YTRLSEIGRG…FDVYFAHKVL (307 aa). ATP-binding positions include 36 to 44 and Lys-59; that span reads IGRGSFAVV. The active-site Proton acceptor is Asp-174. Disordered regions lie at residues 343 to 489, 524 to 586, 795 to 817, and 878 to 900; these read LVAD…KEHA, GGQA…PTSA, RLPSDHPSHPSNLSVGSSLGSGT, and SRPGQSGGADRADARRDNEDGGQ. Residues 373–387 are compositionally biased toward basic and acidic residues; it reads MKRENALSGGVRDEP. The segment covering 396–410 has biased composition (polar residues); that stretch reads AMTQSPRPETPSTPM. Over residues 477-489 the composition is skewed to basic and acidic residues; sequence KPVEKAKDEKEHA. The segment covering 534-555 has biased composition (low complexity); sequence SGAAPGTPPAGGSSPHASPSKA. The segment covering 563–579 has biased composition (basic and acidic residues); that stretch reads SRADSAHVRQNSYDRRY. Positions 805 to 817 are enriched in low complexity; that stretch reads SNLSVGSSLGSGT. Positions 887 to 896 are enriched in basic and acidic residues; that stretch reads DRADARRDNE.

It belongs to the protein kinase superfamily. Ser/Thr protein kinase family. APG1/unc-51/ULK1 subfamily. In terms of assembly, homodimer. Forms a ternary complex with ATG13 and ATG17.

Its subcellular location is the cytoplasm. It is found in the preautophagosomal structure membrane. It catalyses the reaction L-seryl-[protein] + ATP = O-phospho-L-seryl-[protein] + ADP + H(+). The enzyme catalyses L-threonyl-[protein] + ATP = O-phospho-L-threonyl-[protein] + ADP + H(+). Serine/threonine protein kinase involved in the cytoplasm to vacuole transport (Cvt) and found to be essential in autophagy, where it is required for the formation of autophagosomes. Involved in the clearance of protein aggregates which cannot be efficiently cleared by the proteasome. Required for selective autophagic degradation of the nucleus (nucleophagy) as well as for mitophagy which contributes to regulate mitochondrial quantity and quality by eliminating the mitochondria to a basal level to fulfill cellular energy requirements and preventing excess ROS production. Also involved in endoplasmic reticulum-specific autophagic process, in selective removal of ER-associated degradation (ERAD) substrates. Plays a key role in ATG9 and ATG23 cycling through the pre-autophagosomal structure and is necessary to promote ATG18 binding to ATG9 through phosphorylation of ATG9. Catalyzes phosphorylation of ATG4, decreasing the interaction between ATG4 and ATG8 and impairing deconjugation of PE-conjugated forms of ATG8. This Aspergillus niger (strain ATCC MYA-4892 / CBS 513.88 / FGSC A1513) protein is Serine/threonine-protein kinase atg1.